The following is a 442-amino-acid chain: F-box/FBD/LRR-repeat protein At2g26030 (442 aa).

Residues 3-49 (CDRICELPDSLLTQVLSYLPTIDSVKTSVLSKRWEFLWLRVPVLDLK) form the F-box domain. 6 LRR repeats span residues 128–160 (CNTL…HLED), 162–187 (WYYD…VLIR), 188–214 (PIDF…RLTF), 234–260 (YLNF…DIDS), 278–309 (KRDI…DRYS), and 324–352 (QAAV…ILDF). The 53-residue stretch at 358–410 (PEQDGLTYVPQCLLSSLECVEIRELIMGEETGEKLVRYFLKNSVVLKKLILRL) folds into the FBD domain.

The sequence is that of F-box/FBD/LRR-repeat protein At2g26030 from Arabidopsis thaliana (Mouse-ear cress).